Consider the following 1342-residue polypeptide: DNA-directed RNA polymerase subunit beta (1342 aa).

Belongs to the RNA polymerase beta chain family. As to quaternary structure, the RNAP catalytic core consists of 2 alpha, 1 beta, 1 beta' and 1 omega subunit. When a sigma factor is associated with the core the holoenzyme is formed, which can initiate transcription.

The catalysed reaction is RNA(n) + a ribonucleoside 5'-triphosphate = RNA(n+1) + diphosphate. Functionally, DNA-dependent RNA polymerase catalyzes the transcription of DNA into RNA using the four ribonucleoside triphosphates as substrates. The sequence is that of DNA-directed RNA polymerase subunit beta from Klebsiella pneumoniae (strain 342).